A 155-amino-acid polypeptide reads, in one-letter code: UPF0260 protein NGR_c07710 (155 aa).

The protein belongs to the UPF0260 family.

In Sinorhizobium fredii (strain NBRC 101917 / NGR234), this protein is UPF0260 protein NGR_c07710.